Here is a 345-residue protein sequence, read N- to C-terminus: Ferredoxin--NADP reductase (345 aa).

FAD contacts are provided by aspartate 38, glutamine 46, tyrosine 51, valine 91, phenylalanine 129, aspartate 295, and threonine 336.

This sequence belongs to the ferredoxin--NADP reductase type 2 family. As to quaternary structure, homodimer. FAD serves as cofactor.

It catalyses the reaction 2 reduced [2Fe-2S]-[ferredoxin] + NADP(+) + H(+) = 2 oxidized [2Fe-2S]-[ferredoxin] + NADPH. The polypeptide is Ferredoxin--NADP reductase (Rhodospirillum rubrum (strain ATCC 11170 / ATH 1.1.1 / DSM 467 / LMG 4362 / NCIMB 8255 / S1)).